Here is a 245-residue protein sequence, read N- to C-terminus: Deoxyadenosine kinase (245 aa).

Residue 28 to 36 (GLIGAGKTT) participates in ATP binding. E52, Y64, and Q75 together coordinate substrate. The active-site Proton acceptor is D99. Substrate-binding residues include R100, D105, and E165.

It belongs to the DCK/DGK family.

It catalyses the reaction 2'-deoxyadenosine + ATP = dAMP + ADP + H(+). Its function is as follows. Specific kinase that phosphorylates deoxyadenosine but not any other deoxyribonucleoside, as part of the deoxyribonucleotide salvage pathway. The chain is Deoxyadenosine kinase (dak) from Dictyostelium discoideum (Social amoeba).